Here is a 166-residue protein sequence, read N- to C-terminus: Crossover junction endodeoxyribonuclease RuvC (166 aa).

Residues D11, E71, and D142 contribute to the active site. D11, E71, and D142 together coordinate Mg(2+).

It belongs to the RuvC family. Homodimer which binds Holliday junction (HJ) DNA. The HJ becomes 2-fold symmetrical on binding to RuvC with unstacked arms; it has a different conformation from HJ DNA in complex with RuvA. In the full resolvosome a probable DNA-RuvA(4)-RuvB(12)-RuvC(2) complex forms which resolves the HJ. Requires Mg(2+) as cofactor.

It localises to the cytoplasm. It carries out the reaction Endonucleolytic cleavage at a junction such as a reciprocal single-stranded crossover between two homologous DNA duplexes (Holliday junction).. Its function is as follows. The RuvA-RuvB-RuvC complex processes Holliday junction (HJ) DNA during genetic recombination and DNA repair. Endonuclease that resolves HJ intermediates. Cleaves cruciform DNA by making single-stranded nicks across the HJ at symmetrical positions within the homologous arms, yielding a 5'-phosphate and a 3'-hydroxyl group; requires a central core of homology in the junction. The consensus cleavage sequence is 5'-(A/T)TT(C/G)-3'. Cleavage occurs on the 3'-side of the TT dinucleotide at the point of strand exchange. HJ branch migration catalyzed by RuvA-RuvB allows RuvC to scan DNA until it finds its consensus sequence, where it cleaves and resolves the cruciform DNA. The polypeptide is Crossover junction endodeoxyribonuclease RuvC (Maricaulis maris (strain MCS10) (Caulobacter maris)).